A 109-amino-acid chain; its full sequence is uncharacterized protein (109 aa).

The signal sequence occupies residues 1–22 (MKPYSTLFLFTLLTLTTVPAQA). The disordered stretch occupies residues 39–109 (AYNPDHGRDY…ERRMEDEYGQ (71 aa)). The segment covering 41–109 (NPDHGRDYED…ERRMEDEYGQ (69 aa)) has biased composition (basic and acidic residues).

This is an uncharacterized protein from Shigella dysenteriae serotype 1 (strain Sd197).